Consider the following 582-residue polypeptide: Aspartate--tRNA(Asp/Asn) ligase (582 aa).

Glutamate 177 is a binding site for L-aspartate. Residues 201–204 are aspartate; it reads QLFK. L-aspartate is bound at residue arginine 223. ATP is bound by residues 223-225 and glutamine 232; that span reads RDE. Residue histidine 447 participates in L-aspartate binding. Glutamate 481 contacts ATP. Arginine 488 is an L-aspartate binding site. Residue 533–536 participates in ATP binding; the sequence is GLDR.

It belongs to the class-II aminoacyl-tRNA synthetase family. Type 1 subfamily. As to quaternary structure, homodimer.

It localises to the cytoplasm. It catalyses the reaction tRNA(Asx) + L-aspartate + ATP = L-aspartyl-tRNA(Asx) + AMP + diphosphate. Functionally, aspartyl-tRNA synthetase with relaxed tRNA specificity since it is able to aspartylate not only its cognate tRNA(Asp) but also tRNA(Asn). Reaction proceeds in two steps: L-aspartate is first activated by ATP to form Asp-AMP and then transferred to the acceptor end of tRNA(Asp/Asn). The sequence is that of Aspartate--tRNA(Asp/Asn) ligase from Chlamydia muridarum (strain MoPn / Nigg).